We begin with the raw amino-acid sequence, 313 residues long: Malate dehydrogenase (313 aa).

NAD(+)-binding positions include 11–16 and D35; that span reads GAGNIG. R86 and R92 together coordinate substrate. NAD(+) is bound by residues N99 and 122-124; that span reads ISN. The substrate site is built by N124 and R155. H179 acts as the Proton acceptor in catalysis.

Belongs to the LDH/MDH superfamily. MDH type 3 family.

The enzyme catalyses (S)-malate + NAD(+) = oxaloacetate + NADH + H(+). Catalyzes the reversible oxidation of malate to oxaloacetate. This is Malate dehydrogenase from Sorangium cellulosum (strain So ce56) (Polyangium cellulosum (strain So ce56)).